A 1428-amino-acid chain; its full sequence is DNA topoisomerase 2 (1428 aa).

Residues asparagine 70, asparagine 99, 127 to 129 (SSN), and 140 to 147 (GRNGYGAK) contribute to the ATP site. Residues 333–336 (KKKK) are interaction with DNA. 365–367 (QTK) lines the ATP pocket. A Toprim domain is found at 443–557 (CTLVLTEGDS…GLLDIQGFLL (115 aa)). Residues glutamate 449, aspartate 526, and aspartate 528 each coordinate Mg(2+). Residues 692-1159 (IPNVLDGFKP…SAKDIWNTDL (468 aa)) enclose the Topo IIA-type catalytic domain. The active-site O-(5'-phospho-DNA)-tyrosine intermediate is tyrosine 782. An interaction with DNA region spans residues 965 to 974 (KLISPISLMN). Disordered stretches follow at residues 1083–1102 (KGATSDEEDEESSHEDTENV), 1176–1217 (ARGG…RKGK), 1240–1288 (KAPT…ELSK), and 1303–1428 (MGST…NEED). Threonine 1086 carries the post-translational modification Phosphothreonine; by CK2. The residue at position 1087 (serine 1087) is a Phosphoserine; by CK2. Residues 1207–1217 (KNKKSTARKGK) are compositionally biased toward basic residues. Serine 1252 bears the Phosphoserine mark. Threonine 1258 carries the post-translational modification Phosphothreonine; by CK2. Residues serine 1266, serine 1269, and serine 1272 each carry the phosphoserine; by CK2 modification. The span at 1275–1286 (DIKKEDKDEGEL) shows a compositional bias: basic and acidic residues. The span at 1332–1347 (TAVKPKLAKKPVRKQQ) shows a compositional bias: basic residues. Phosphoserine; by CK2 occurs at positions 1353, 1356, 1408, and 1423. Positions 1403–1428 (ELSDDSFIEDDEEENQGSDVSFNEED) are enriched in acidic residues.

Belongs to the type II topoisomerase family. As to quaternary structure, homodimer. The cofactor is Mg(2+). Mn(2+) serves as cofactor. Ca(2+) is required as a cofactor. Post-translationally, phosphorylation enhances the activity. Stimulates decatenation activity.

It localises to the nucleus. The enzyme catalyses ATP-dependent breakage, passage and rejoining of double-stranded DNA.. Its function is as follows. Control of topological states of DNA by transient breakage and subsequent rejoining of DNA strands. Topoisomerase II makes double-strand breaks. Essential during mitosis and meiosis for proper segregation of daughter chromosomes. This Saccharomyces cerevisiae (strain ATCC 204508 / S288c) (Baker's yeast) protein is DNA topoisomerase 2 (TOP2).